Reading from the N-terminus, the 180-residue chain is Adenine phosphoribosyltransferase (180 aa).

A2 carries the post-translational modification N-acetylalanine. 3 positions are modified to phosphoserine: S4, S15, and S30. Y60 carries the post-translational modification Phosphotyrosine. The residue at position 66 (S66) is a Phosphoserine. K114 carries the N6-acetyllysine modification. T135 carries the phosphothreonine modification.

It belongs to the purine/pyrimidine phosphoribosyltransferase family. Homodimer.

It is found in the cytoplasm. The enzyme catalyses AMP + diphosphate = 5-phospho-alpha-D-ribose 1-diphosphate + adenine. Its pathway is purine metabolism; AMP biosynthesis via salvage pathway; AMP from adenine: step 1/1. In terms of biological role, catalyzes a salvage reaction resulting in the formation of AMP, that is energically less costly than de novo synthesis. The protein is Adenine phosphoribosyltransferase of Cricetulus griseus (Chinese hamster).